Reading from the N-terminus, the 680-residue chain is Tripartite terminase subunit 1 (680 aa).

The C3H1-type zinc finger occupies 180 to 208 (CLECVLETSVVPNQGETLNELLLNHNCHH). Position 610-617 (610-617 (YNITWEKN)) interacts with ATP.

The protein belongs to the herpesviridae TRM1 protein family. Associates with TRM2 and TRM3 to form the tripartite terminase complex. Interacts with portal protein.

Its subcellular location is the host nucleus. In terms of biological role, component of the molecular motor that translocates viral genomic DNA in empty capsid during DNA packaging. Forms a tripartite terminase complex together with TRM2 and TRM3 in the host cytoplasm. Once the complex reaches the host nucleus, it interacts with the capsid portal vertex. This portal forms a ring in which genomic DNA is translocated into the capsid. TRM1 carries an endonuclease activity that plays an important role for the cleavage of concatemeric viral DNA into unit length genomes. The chain is Tripartite terminase subunit 1 from Alcelaphine herpesvirus 1 (strain C500) (AlHV-1).